The following is a 522-amino-acid chain: DEP domain-containing protein 7 (522 aa).

Residues 46–138 (LYTQVEVKKR…SSCSLYRFLN (93 aa)) form the DEP domain.

The protein belongs to the DEPDC7 family.

The polypeptide is DEP domain-containing protein 7 (depdc7) (Xenopus laevis (African clawed frog)).